The primary structure comprises 256 residues: Phosphonates import ATP-binding protein PhnC (256 aa).

Positions 3-247 (LELKNISKTY…VLHKEIFTNV (245 aa)) constitute an ABC transporter domain. An ATP-binding site is contributed by 36-43 (GLSGAGKS).

The protein belongs to the ABC transporter superfamily. Phosphonates importer (TC 3.A.1.9.1) family. The complex is composed of two ATP-binding proteins (PhnC), two transmembrane proteins (PhnE) and a solute-binding protein (PhnD).

It is found in the cell inner membrane. It catalyses the reaction phosphonate(out) + ATP + H2O = phosphonate(in) + ADP + phosphate + H(+). In terms of biological role, part of the ABC transporter complex PhnCDE involved in phosphonates import. Responsible for energy coupling to the transport system. This Treponema denticola (strain ATCC 35405 / DSM 14222 / CIP 103919 / JCM 8153 / KCTC 15104) protein is Phosphonates import ATP-binding protein PhnC.